Reading from the N-terminus, the 717-residue chain is Fatty acid oxidation complex subunit alpha (717 aa).

Positions 1 to 189 (MIYQSPTIEV…KVGAIDAVVA (189 aa)) are enoyl-CoA hydratase/isomerase. Residue Asp296 participates in substrate binding. Positions 311–717 (KKVNSAAVLG…ANNGSYYQQA (407 aa)) are 3-hydroxyacyl-CoA dehydrogenase. Residues Met324, Asp343, 400–402 (VVE), Lys407, and Ser429 contribute to the NAD(+) site. Catalysis depends on His450, which acts as the For 3-hydroxyacyl-CoA dehydrogenase activity. Residue Asn453 coordinates NAD(+). Substrate is bound by residues Asn500 and Tyr660.

In the N-terminal section; belongs to the enoyl-CoA hydratase/isomerase family. This sequence in the C-terminal section; belongs to the 3-hydroxyacyl-CoA dehydrogenase family. In terms of assembly, heterotetramer of two alpha chains (FadB) and two beta chains (FadA).

It catalyses the reaction a (3S)-3-hydroxyacyl-CoA + NAD(+) = a 3-oxoacyl-CoA + NADH + H(+). It carries out the reaction a (3S)-3-hydroxyacyl-CoA = a (2E)-enoyl-CoA + H2O. The catalysed reaction is a 4-saturated-(3S)-3-hydroxyacyl-CoA = a (3E)-enoyl-CoA + H2O. The enzyme catalyses (3S)-3-hydroxybutanoyl-CoA = (3R)-3-hydroxybutanoyl-CoA. It catalyses the reaction a (3Z)-enoyl-CoA = a 4-saturated (2E)-enoyl-CoA. It carries out the reaction a (3E)-enoyl-CoA = a 4-saturated (2E)-enoyl-CoA. It functions in the pathway lipid metabolism; fatty acid beta-oxidation. Its function is as follows. Involved in the aerobic and anaerobic degradation of long-chain fatty acids via beta-oxidation cycle. Catalyzes the formation of 3-oxoacyl-CoA from enoyl-CoA via L-3-hydroxyacyl-CoA. It can also use D-3-hydroxyacyl-CoA and cis-3-enoyl-CoA as substrate. This chain is Fatty acid oxidation complex subunit alpha, found in Shewanella pealeana (strain ATCC 700345 / ANG-SQ1).